A 253-amino-acid polypeptide reads, in one-letter code: Tabinhibitin 3 (253 aa).

An N-terminal signal peptide occupies residues 1 to 22; it reads MTLKRIFCAALALIVLQSVASA. One can recognise an SCP domain in the interval 66 to 209; that stretch reads LQKTNWLRGV…LKRALFTCNF (144 aa). The Cell attachment site motif lies at 222–224; the sequence is RGD.

Belongs to the CRISP family. As to expression, expressed in salivary glands.

It is found in the secreted. Functionally, inhibits platelet aggregation induced by all agonists tested (ADP, arachidonic acid, the thromboxane A2 analog U46619, thrombin, and snake venom snaclecs (TMVA that activates platelet through GPIB, and stejnulxin that specifically acts through GPVI (GP6))). May act by competing with fibrinogen for binding to glycoprotein IIb/IIIa (ITGA2B/ITGB3). The chain is Tabinhibitin 3 from Tabanus yao (Horsefly).